Here is a 390-residue protein sequence, read N- to C-terminus: Anhydro-N-acetylmuramic acid kinase (390 aa).

Gly-9–Asp-16 provides a ligand contact to ATP.

Belongs to the anhydro-N-acetylmuramic acid kinase family.

The enzyme catalyses 1,6-anhydro-N-acetyl-beta-muramate + ATP + H2O = N-acetyl-D-muramate 6-phosphate + ADP + H(+). It participates in amino-sugar metabolism; 1,6-anhydro-N-acetylmuramate degradation. It functions in the pathway cell wall biogenesis; peptidoglycan recycling. In terms of biological role, catalyzes the specific phosphorylation of 1,6-anhydro-N-acetylmuramic acid (anhMurNAc) with the simultaneous cleavage of the 1,6-anhydro ring, generating MurNAc-6-P. Is required for the utilization of anhMurNAc either imported from the medium or derived from its own cell wall murein, and thus plays a role in cell wall recycling. The protein is Anhydro-N-acetylmuramic acid kinase of Bacillus cereus (strain ATCC 14579 / DSM 31 / CCUG 7414 / JCM 2152 / NBRC 15305 / NCIMB 9373 / NCTC 2599 / NRRL B-3711).